A 252-amino-acid polypeptide reads, in one-letter code: UPF0246 protein FP0718 (252 aa).

Belongs to the UPF0246 family.

The sequence is that of UPF0246 protein FP0718 from Flavobacterium psychrophilum (strain ATCC 49511 / DSM 21280 / CIP 103535 / JIP02/86).